Consider the following 654-residue polypeptide: Peptide-N(4)-(N-acetyl-beta-glucosaminyl)asparagine amidase (654 aa).

Residue alanine 2 is modified to N-acetylalanine. The PUB domain occupies 30-91 (EASKLLLTYA…EGETHLIFPK (62 aa)). Residues 112-163 (RLDGSNKSHKVKSSQQPAASTQLPTTPSSNPSGLNQHTRNRQGQSSDPPSAS) form a disordered region. Residues 124–163 (SSQQPAASTQLPTTPSSNPSGLNQHTRNRQGQSSDPPSAS) show a composition bias toward polar residues. Threonine 137 is modified (phosphothreonine). Cysteine 250, cysteine 253, cysteine 283, and cysteine 286 together coordinate Zn(2+). Cysteine 309 (nucleophile) is an active-site residue. Residues histidine 336 and aspartate 353 contribute to the active site. In terms of domain architecture, PAW spans 454–654 (ELGGRISGSV…LEIIIKFSDL (201 aa)).

It belongs to the transglutaminase-like superfamily. PNGase family. In terms of assembly, component of a complex required to couple retrotranslocation, ubiquitination and deglycosylation composed of NGLY1, SAKS1, AMFR, VCP and RAD23B. Interacts with the proteasome components RAD23B and PSMC1. Interacts with directly with VCP. Interacts with DERL1, bringing it close to the endoplasmic reticulum membrane. Interacts with SAKS1. It depends on Zn(2+) as a cofactor.

It localises to the cytoplasm. The enzyme catalyses Hydrolysis of an N(4)-(acetyl-beta-D-glucosaminyl)asparagine residue in which the glucosamine residue may be further glycosylated, to yield a (substituted) N-acetyl-beta-D-glucosaminylamine and a peptide containing an aspartate residue.. With respect to regulation, inhibited by Z-VAD-fmk, a well-known caspase inhibitor, which inhibits enzyme activity through covalent binding of the carbohydrate to the single Cys-306 residue. In terms of biological role, specifically deglycosylates the denatured form of N-linked glycoproteins in the cytoplasm and assists their proteasome-mediated degradation. Cleaves the beta-aspartyl-glucosamine (GlcNAc) of the glycan and the amide side chain of Asn, converting Asn to Asp. Prefers proteins containing high-mannose over those bearing complex type oligosaccharides. Can recognize misfolded proteins in the endoplasmic reticulum that are exported to the cytosol to be destroyed and deglycosylate them, while it has no activity toward native proteins. Deglycosylation is a prerequisite for subsequent proteasome-mediated degradation of some, but not all, misfolded glycoproteins. The protein is Peptide-N(4)-(N-acetyl-beta-glucosaminyl)asparagine amidase (NGLY1) of Homo sapiens (Human).